A 732-amino-acid chain; its full sequence is Prolyl endopeptidase-like (732 aa).

Catalysis depends on charge relay system residues serine 575, aspartate 661, and histidine 707.

The protein belongs to the peptidase S9A family. As to quaternary structure, homodimer.

It localises to the cytoplasm. The protein resides in the cytosol. Functionally, serine peptidase whose precise substrate specificity remains unclear. Does not cleave peptides after a arginine or lysine residue. Regulates trans-Golgi network morphology and sorting by regulating the membrane binding of the AP-1 complex. May play a role in the regulation of synaptic vesicle exocytosis. The sequence is that of Prolyl endopeptidase-like (PREPL) from Gallus gallus (Chicken).